A 179-amino-acid chain; its full sequence is Methylated-DNA--protein-cysteine methyltransferase (179 aa).

The active-site Nucleophile; methyl group acceptor is Cys-130.

The protein belongs to the MGMT family.

The protein localises to the cytoplasm. It catalyses the reaction a 6-O-methyl-2'-deoxyguanosine in DNA + L-cysteinyl-[protein] = S-methyl-L-cysteinyl-[protein] + a 2'-deoxyguanosine in DNA. The enzyme catalyses a 4-O-methyl-thymidine in DNA + L-cysteinyl-[protein] = a thymidine in DNA + S-methyl-L-cysteinyl-[protein]. Involved in the cellular defense against the biological effects of O6-methylguanine (O6-MeG) and O4-methylthymine (O4-MeT) in DNA. Repairs the methylated nucleobase in DNA by stoichiometrically transferring the methyl group to a cysteine residue in the enzyme. This is a suicide reaction: the enzyme is irreversibly inactivated. This Haemophilus influenzae (strain ATCC 51907 / DSM 11121 / KW20 / Rd) protein is Methylated-DNA--protein-cysteine methyltransferase.